The chain runs to 218 residues: Large ribosomal subunit protein uL3 (218 aa).

Positions 126–169 are disordered; it reads HGFSRGPMTHGSKNHRQPGSIGAGTTPGRIYPGKRMSGRYGGKK.

It belongs to the universal ribosomal protein uL3 family. As to quaternary structure, part of the 50S ribosomal subunit. Forms a cluster with proteins L14 and L19.

One of the primary rRNA binding proteins, it binds directly near the 3'-end of the 23S rRNA, where it nucleates assembly of the 50S subunit. This chain is Large ribosomal subunit protein uL3, found in Synechococcus sp. (strain CC9902).